Here is a 147-residue protein sequence, read N- to C-terminus: Phosphoribosyl-AMP cyclohydrolase (147 aa).

Asp91 contacts Mg(2+). A Zn(2+)-binding site is contributed by Cys92. Asp93 and Asp95 together coordinate Mg(2+). The Zn(2+) site is built by Cys109 and Cys116.

Belongs to the PRA-CH family. As to quaternary structure, homodimer. It depends on Mg(2+) as a cofactor. The cofactor is Zn(2+).

It localises to the cytoplasm. It carries out the reaction 1-(5-phospho-beta-D-ribosyl)-5'-AMP + H2O = 1-(5-phospho-beta-D-ribosyl)-5-[(5-phospho-beta-D-ribosylamino)methylideneamino]imidazole-4-carboxamide. The protein operates within amino-acid biosynthesis; L-histidine biosynthesis; L-histidine from 5-phospho-alpha-D-ribose 1-diphosphate: step 3/9. In terms of biological role, catalyzes the hydrolysis of the adenine ring of phosphoribosyl-AMP. The polypeptide is Phosphoribosyl-AMP cyclohydrolase (Rhodopseudomonas palustris (strain BisB18)).